Consider the following 388-residue polypeptide: LL-diaminopimelate aminotransferase (388 aa).

Positions 16 and 41 each coordinate substrate. Residues tyrosine 70, 104–105, tyrosine 129, asparagine 179, tyrosine 210, and 239–241 contribute to the pyridoxal 5'-phosphate site; these read SK and SLS. Residues lysine 105, tyrosine 129, and asparagine 179 each coordinate substrate. Position 242 is an N6-(pyridoxal phosphate)lysine (lysine 242). Pyridoxal 5'-phosphate is bound at residue arginine 250. Position 368 (arginine 368) interacts with substrate.

It belongs to the class-I pyridoxal-phosphate-dependent aminotransferase family. LL-diaminopimelate aminotransferase subfamily. Homodimer. It depends on pyridoxal 5'-phosphate as a cofactor.

The enzyme catalyses (2S,6S)-2,6-diaminopimelate + 2-oxoglutarate = (S)-2,3,4,5-tetrahydrodipicolinate + L-glutamate + H2O + H(+). It functions in the pathway amino-acid biosynthesis; L-lysine biosynthesis via DAP pathway; LL-2,6-diaminopimelate from (S)-tetrahydrodipicolinate (aminotransferase route): step 1/1. In terms of biological role, involved in the synthesis of meso-diaminopimelate (m-DAP or DL-DAP), required for both lysine and peptidoglycan biosynthesis. Catalyzes the direct conversion of tetrahydrodipicolinate to LL-diaminopimelate. This is LL-diaminopimelate aminotransferase from Oleidesulfovibrio alaskensis (strain ATCC BAA-1058 / DSM 17464 / G20) (Desulfovibrio alaskensis).